We begin with the raw amino-acid sequence, 263 residues long: Acyl-[acyl-carrier-protein]--UDP-N-acetylglucosamine O-acyltransferase (263 aa).

Belongs to the transferase hexapeptide repeat family. LpxA subfamily. Homotrimer.

Its subcellular location is the cytoplasm. It carries out the reaction a (3R)-hydroxyacyl-[ACP] + UDP-N-acetyl-alpha-D-glucosamine = a UDP-3-O-[(3R)-3-hydroxyacyl]-N-acetyl-alpha-D-glucosamine + holo-[ACP]. It functions in the pathway glycolipid biosynthesis; lipid IV(A) biosynthesis; lipid IV(A) from (3R)-3-hydroxytetradecanoyl-[acyl-carrier-protein] and UDP-N-acetyl-alpha-D-glucosamine: step 1/6. Functionally, involved in the biosynthesis of lipid A, a phosphorylated glycolipid that anchors the lipopolysaccharide to the outer membrane of the cell. In Tolumonas auensis (strain DSM 9187 / NBRC 110442 / TA 4), this protein is Acyl-[acyl-carrier-protein]--UDP-N-acetylglucosamine O-acyltransferase.